Reading from the N-terminus, the 1076-residue chain is ESX secretion system protein YueB (1076 aa).

The chain crosses the membrane as a helical span at residues 9 to 29; it reads IKLISAVIIILLLPVLFFRFI. Disordered regions lie at residues 372–404 and 423–552; these read RLSLLKPKESDEKEDGEDTSDNKDDTDKEDIED and IKDI…ETDI. The segment covering 423-439 has biased composition (basic and acidic residues); sequence IKDISEGLKEPEQEKPT. Composition is skewed to polar residues over residues 449–495 and 503–522; these read DDSP…NIET and SKNVPEQDTNTENTGTSKTD. The stretch at 552–622 forms a coiled coil; the sequence is ISGAKKRLNE…TKKLVDFDNN (71 aa). 5 consecutive transmembrane segments (helical) span residues 904–924, 938–958, 964–984, 995–1015, and 1040–1060; these read TVPPVVILVIVLISSLLIGYF, ALFGILNILVGLMISLFGLNI, DQTIKWSVFTILLLVASSAFI, GWVASAAMILFYVAPLIDLIM, and TMGITVLLIITVIAVALPLII.

The protein belongs to the EsaA family.

It localises to the cell membrane. Its function is as follows. Required for YukE secretion. Probable component or regulator of the ESX/ESAT-6-like secretion system (BsEss). Bacteriophage SPP1 receptor. Essential for the irreversible adsorption of the bacteriophage. In Bacillus subtilis (strain 168), this protein is ESX secretion system protein YueB (yueB).